Here is a 490-residue protein sequence, read N- to C-terminus: Cytochrome P450 2C26 (490 aa).

C435 serves as a coordination point for heme.

This sequence belongs to the cytochrome P450 family. Heme serves as cofactor.

It is found in the endoplasmic reticulum membrane. The protein resides in the microsome membrane. The catalysed reaction is an organic molecule + reduced [NADPH--hemoprotein reductase] + O2 = an alcohol + oxidized [NADPH--hemoprotein reductase] + H2O + H(+). In terms of biological role, catalyzes the hydroxylation of tolbutamide and the N-demethylation of aminopyrine and benzphetamine. The chain is Cytochrome P450 2C26 (CYP2C26) from Mesocricetus auratus (Golden hamster).